The following is a 249-amino-acid chain: Acetylglutamate kinase (249 aa).

Residues 38-39 (GG), Arg-60, and Asn-147 contribute to the substrate site.

This sequence belongs to the acetylglutamate kinase family. ArgB subfamily.

It localises to the cytoplasm. It carries out the reaction N-acetyl-L-glutamate + ATP = N-acetyl-L-glutamyl 5-phosphate + ADP. Its pathway is amino-acid biosynthesis; L-arginine biosynthesis; N(2)-acetyl-L-ornithine from L-glutamate: step 2/4. Functionally, catalyzes the ATP-dependent phosphorylation of N-acetyl-L-glutamate. This is Acetylglutamate kinase from Deinococcus geothermalis (strain DSM 11300 / CIP 105573 / AG-3a).